We begin with the raw amino-acid sequence, 65 residues long: Large ribosomal subunit protein uL29 (65 aa).

A disordered region spans residues 30-49; sequence ERSSVAMGGAPSSPGKMRSI.

This sequence belongs to the universal ribosomal protein uL29 family.

This Picrophilus torridus (strain ATCC 700027 / DSM 9790 / JCM 10055 / NBRC 100828 / KAW 2/3) protein is Large ribosomal subunit protein uL29.